The primary structure comprises 501 residues: Lysine--tRNA ligase (501 aa).

Mg(2+) is bound by residues Glu-411 and Glu-418.

The protein belongs to the class-II aminoacyl-tRNA synthetase family. In terms of assembly, homodimer. Requires Mg(2+) as cofactor.

Its subcellular location is the cytoplasm. It catalyses the reaction tRNA(Lys) + L-lysine + ATP = L-lysyl-tRNA(Lys) + AMP + diphosphate. In Thiobacillus denitrificans (strain ATCC 25259 / T1), this protein is Lysine--tRNA ligase.